Reading from the N-terminus, the 824-residue chain is Kinesin-like protein KIFC3 (824 aa).

Residues 27 to 79 are disordered; it reads EPKPGMARPAPASPAARPFPHTGQGRLRTGRGKDILPSGEEDSTSRTAARPSL. Positions 33 to 46 are enriched in low complexity; that stretch reads ARPAPASPAARPFP. Coiled coils occupy residues 100-360 and 393-430; these read LTVQ…ENLA and LLQEALRSVKAEIGQAIEEVNSNNQELLRKYRRELQLR. A Kinesin motor domain is found at 443–766; the sequence is NIRVIARVRP…LRFAERVRSV (324 aa). ATP is bound at residue 526–533; sequence GQTGAGKT. Residues 771–824 are disordered; that stretch reads GSRRTELGSWSSQEHLEWEPACQTPQPTARAHSAPGSGTSSRPGSIRRKLQPSA. Residues serine 811 and serine 815 each carry the phosphoserine modification. Basic residues predominate over residues 815–824; sequence SIRRKLQPSA.

It belongs to the TRAFAC class myosin-kinesin ATPase superfamily. Kinesin family. Interacts with annexin XIIIB. As to expression, predominant expression in the kidney, testis and ovary. Also expressed in brain, heart, liver, lung and uterus.

The protein localises to the cytoplasm. It is found in the cytoskeleton. Its subcellular location is the cytoplasmic vesicle membrane. The protein resides in the cell junction. It localises to the adherens junction. The protein localises to the microtubule organizing center. It is found in the centrosome. Functionally, minus-end microtubule-dependent motor protein. Involved in apically targeted transport. Required for zonula adherens maintenance. The chain is Kinesin-like protein KIFC3 (Kifc3) from Mus musculus (Mouse).